Reading from the N-terminus, the 629-residue chain is tRNA uridine 5-carboxymethylaminomethyl modification enzyme MnmG (629 aa).

13-18 (GGGHAG) lines the FAD pocket. 273 to 287 (GPRYCPSIEDKITRF) lines the NAD(+) pocket.

Belongs to the MnmG family. In terms of assembly, homodimer. Heterotetramer of two MnmE and two MnmG subunits. FAD is required as a cofactor.

It is found in the cytoplasm. Functionally, NAD-binding protein involved in the addition of a carboxymethylaminomethyl (cmnm) group at the wobble position (U34) of certain tRNAs, forming tRNA-cmnm(5)s(2)U34. The polypeptide is tRNA uridine 5-carboxymethylaminomethyl modification enzyme MnmG (Aeromonas hydrophila subsp. hydrophila (strain ATCC 7966 / DSM 30187 / BCRC 13018 / CCUG 14551 / JCM 1027 / KCTC 2358 / NCIMB 9240 / NCTC 8049)).